Reading from the N-terminus, the 523-residue chain is Peptide chain release factor 3 (523 aa).

The tr-type G domain occupies 8–275 (KKRRTFAIIS…TFLEYAPEPH (268 aa)). Residues 17–24 (SHPDAGKT), 85–89 (DTPGH), and 139–142 (NKLD) each bind GTP.

It belongs to the TRAFAC class translation factor GTPase superfamily. Classic translation factor GTPase family. PrfC subfamily.

The protein resides in the cytoplasm. Its function is as follows. Increases the formation of ribosomal termination complexes and stimulates activities of RF-1 and RF-2. It binds guanine nucleotides and has strong preference for UGA stop codons. It may interact directly with the ribosome. The stimulation of RF-1 and RF-2 is significantly reduced by GTP and GDP, but not by GMP. The polypeptide is Peptide chain release factor 3 (prfC) (Lactococcus lactis subsp. lactis (strain IL1403) (Streptococcus lactis)).